A 320-amino-acid chain; its full sequence is Annexin A5 (320 aa).

Alanine 2 carries the N-acetylalanine modification. Annexin repeat units lie at residues phenylalanine 15–lysine 86, proline 87–glutamine 158, alanine 170–lysine 242, and serine 246–glycine 317. Residue lysine 29 forms a Glycyl lysine isopeptide (Lys-Gly) (interchain with G-Cter in SUMO1); alternate linkage. Lysine 29 is covalently cross-linked (Glycyl lysine isopeptide (Lys-Gly) (interchain with G-Cter in SUMO2); alternate). The residue at position 37 (serine 37) is a Phosphoserine. Residues lysine 70, lysine 76, lysine 79, lysine 97, and lysine 101 each carry the N6-acetyllysine modification. An N6-succinyllysine modification is found at lysine 290. The short motif at leucine 314 to aspartate 320 is the [IL]-x-C-x-x-[DE] motif element.

It belongs to the annexin family. Monomer. Binds ATRX and EIF5B. In terms of processing, S-nitrosylation is induced by interferon-gamma and oxidatively-modified low-densitity lipoprotein (LDL(ox)) possibly implicating the iNOS-S100A8/9 transnitrosylase complex.

Functionally, this protein is an anticoagulant protein that acts as an indirect inhibitor of the thromboplastin-specific complex, which is involved in the blood coagulation cascade. The polypeptide is Annexin A5 (ANXA5) (Macaca fascicularis (Crab-eating macaque)).